A 180-amino-acid chain; its full sequence is Large ribosomal subunit protein uL5 (180 aa).

Belongs to the universal ribosomal protein uL5 family. In terms of assembly, part of the 50S ribosomal subunit; part of the 5S rRNA/L5/L18/L25 subcomplex. Contacts the 5S rRNA and the P site tRNA. Forms a bridge to the 30S subunit in the 70S ribosome.

Its function is as follows. This is one of the proteins that bind and probably mediate the attachment of the 5S RNA into the large ribosomal subunit, where it forms part of the central protuberance. In the 70S ribosome it contacts protein S13 of the 30S subunit (bridge B1b), connecting the 2 subunits; this bridge is implicated in subunit movement. Contacts the P site tRNA; the 5S rRNA and some of its associated proteins might help stabilize positioning of ribosome-bound tRNAs. The sequence is that of Large ribosomal subunit protein uL5 from Anaeromyxobacter sp. (strain Fw109-5).